The primary structure comprises 359 residues: Peptide chain release factor 1 (359 aa).

At glutamine 235 the chain carries N5-methylglutamine. The interval 283 to 309 (QKAESERSQARRSQVGSGDRSERIRTY) is disordered.

This sequence belongs to the prokaryotic/mitochondrial release factor family. Post-translationally, methylated by PrmC. Methylation increases the termination efficiency of RF1.

Its subcellular location is the cytoplasm. Peptide chain release factor 1 directs the termination of translation in response to the peptide chain termination codons UAG and UAA. This Brucella canis (strain ATCC 23365 / NCTC 10854 / RM-666) protein is Peptide chain release factor 1.